The chain runs to 193 residues: MLDREGFRPNVGIILINAQNEVWWGKRVREHSWQFPQGGIKFGETPEQAMFRELEEEVGLRAEHVKIIGRTRDWLRYEVPDHFIKREIRGHYKGQKQIWFLLRMVGRDCDVNLRLTEHPEFDAWRWHDYWVPLDVVIEFKRDVYQRALQELSRFLSRPAHPAPIHNTARYLRQTHSARKTDEPSTEQTKPNNE.

A Nudix hydrolase domain is found at 6–149 (GFRPNVGIIL…KRDVYQRALQ (144 aa)). Residues 38–59 (GGIKFGETPEQAMFRELEEEVG) carry the Nudix box motif. The interval 174–193 (THSARKTDEPSTEQTKPNNE) is disordered.

It belongs to the Nudix hydrolase family. RppH subfamily. A divalent metal cation is required as a cofactor.

Its function is as follows. Accelerates the degradation of transcripts by removing pyrophosphate from the 5'-end of triphosphorylated RNA, leading to a more labile monophosphorylated state that can stimulate subsequent ribonuclease cleavage. The protein is RNA pyrophosphohydrolase of Herminiimonas arsenicoxydans.